Consider the following 333-residue polypeptide: NAC domain-containing protein 26 (333 aa).

Residues L14–K173 form the NAC domain. Residues I114–K179 mediate DNA binding. The disordered stretch occupies residues A143 to Q162. Positions P147–A157 are enriched in pro residues.

As to quaternary structure, forms homodimers. Forms heterodimers with NAC20. Forms heterodimers with NAC23. Expressed in developing seeds.

It localises to the nucleus. Functionally, transcription factor that acts redundantly with NAC20 to regulate the expression of genes involved in the biosynthesis of starch and storage proteins in grain. Directly binds to the promoters of starch synthase 1 (SS1), pullulanase (PUL), glutelin A1 (GLUA1), glutelins B4 and B5 (GLUB4 and GLUB5), alpha-globulin and 16 kDa prolamin, and activates their expression. Possesses transactivation activity in yeast. This is NAC domain-containing protein 26 from Oryza sativa subsp. indica (Rice).